The chain runs to 107 residues: Anti-adapter protein IraM (107 aa).

This sequence belongs to the IraM/RssC family.

The protein localises to the cytoplasm. Its function is as follows. Inhibits RpoS proteolysis by regulating RssB activity, thereby increasing the stability of the sigma stress factor RpoS during magnesium starvation. The polypeptide is Anti-adapter protein IraM (Escherichia coli (strain 55989 / EAEC)).